We begin with the raw amino-acid sequence, 326 residues long: Vitamin B12 import system permease protein BtuC (326 aa).

The next 9 helical transmembrane spans lie at 19–39 (LSVL…LWIL), 61–81 (LAVL…QALF), 88–108 (PGLL…VLLG), 112–132 (LPNW…TLIL), 146–166 (LLAG…AIYF), 184–204 (GGVD…LLWI), 240–260 (GWMV…GLVI), 274–294 (VLLP…DIVA), and 302–322 (ELPI…WLLL).

Belongs to the binding-protein-dependent transport system permease family. FecCD subfamily. The complex is composed of two ATP-binding proteins (BtuD), two transmembrane proteins (BtuC) and a solute-binding protein (BtuF).

It localises to the cell inner membrane. Part of the ABC transporter complex BtuCDF involved in vitamin B12 import. Involved in the translocation of the substrate across the membrane. The polypeptide is Vitamin B12 import system permease protein BtuC (Escherichia coli O127:H6 (strain E2348/69 / EPEC)).